The chain runs to 269 residues: Tryptophan synthase alpha chain (269 aa).

Catalysis depends on proton acceptor residues glutamate 49 and aspartate 60.

This sequence belongs to the TrpA family. In terms of assembly, tetramer of two alpha and two beta chains.

The catalysed reaction is (1S,2R)-1-C-(indol-3-yl)glycerol 3-phosphate + L-serine = D-glyceraldehyde 3-phosphate + L-tryptophan + H2O. Its pathway is amino-acid biosynthesis; L-tryptophan biosynthesis; L-tryptophan from chorismate: step 5/5. The alpha subunit is responsible for the aldol cleavage of indoleglycerol phosphate to indole and glyceraldehyde 3-phosphate. The chain is Tryptophan synthase alpha chain from Pseudomonas putida (strain W619).